Consider the following 387-residue polypeptide: Protein NDRG3 (387 aa).

Positions 329 to 387 (PSASMTRLVRSRTHSASSSGSMEMPRSRSHTSNAQLQSTSNNSLSNQIQETPHTIELSC) are disordered. Residues 359 to 377 (TSNAQLQSTSNNSLSNQIQ) are compositionally biased toward low complexity.

This sequence belongs to the NDRG family.

The chain is Protein NDRG3 from Xenopus tropicalis (Western clawed frog).